We begin with the raw amino-acid sequence, 130 residues long: Small ribosomal subunit protein uS9 (130 aa).

Belongs to the universal ribosomal protein uS9 family.

In Alkalilimnicola ehrlichii (strain ATCC BAA-1101 / DSM 17681 / MLHE-1), this protein is Small ribosomal subunit protein uS9.